The primary structure comprises 116 residues: Endoribonuclease toxin ChpB (116 aa).

The protein belongs to the PemK/MazF family. Homodimer, interacts with ChpS, which inhibits the endoribonuclease activity.

Its activity is regulated as follows. Stimulated in vitro in a concentration-dependent fashion by extracellular death factor (EDF, a quorum sensing pentapeptide sequence NNWNN, probably produced from the zwf gene product glucose-6-phosphate 1-dehydrogenase), which is able to overcome inhibition by cognate antitoxin ChpS. Toxic component of a type II toxin-antitoxin (TA) system. ChpB is a sequence-specific mRNA and (weak) tmRNA endoribonuclease that inhibits protein synthesis and induces bacterial stasis. Cleavage is independent of the ribosome. Cleavage occurs at ACY sequences where Y is not C. The endoribonuclease activity is not as strong as that of MazF. The endoribonuclease activity (a toxin) is inhibited by its labile cognate antitoxin ChpS. Toxicity results when the levels of ChpS decrease in the cell, leading to mRNA degradation. Both ChpS and ChpB probably bind to the promoter region of the chpS-chpB operon to autoregulate their synthesis. This Escherichia coli (strain K12) protein is Endoribonuclease toxin ChpB (chpB).